A 313-amino-acid chain; its full sequence is DDRGK domain-containing protein 1 (313 aa).

A helical membrane pass occupies residues 1 to 28 (MVSPVVYLVVAALLVGLILFLTRGRGRA). The tract at residues 1–113 (MVSPVVYLVV…IEKPVETHLS (113 aa)) is mediates interaction with CDK5RAP3. At 29 to 313 (AAAAQEPLHN…GRETPAQAPA (285 aa)) the chain is on the cytoplasmic side. The tract at residues 40–88 (EVPAAAGRVARPQPLEPEEQRAAGRPRRRRDLGSRLQAQRRAQRVAWAD) is disordered. Residues serine 73 and serine 113 each carry the phosphoserine modification. The span at 73–87 (SRLQAQRRAQRVAWA) shows a compositional bias: low complexity. The interval 117–215 (GAKKLRKLEE…MTEEQSHSFL (99 aa)) is mediates interaction with TRIP4. The segment at 130–185 (RKAQREAEEAEREERKRLESQREAEWKKEEERLRLEEEQKEEEERKAQEEQAQREH) is disordered. The short motif at 194 to 208 (TFVVVEEGVGETMTE) is the UFM1-interacting motif (UFIM) element. The interval 215-313 (LAEFINYIKQ…GRETPAQAPA (99 aa)) is mediates interaction with UFL1. Positions 228–272 (VLLEDLASQVGLRTQDTINRIQDLLAEGTLTGVIDDRGKFIYITP) constitute a PCI domain. Lysine 266 is covalently cross-linked (Glycyl lysine isopeptide (Lys-Gly) (interchain with G-Cter in UFM1)).

This sequence belongs to the DDRGK1 family. In terms of assembly, component of the UFM1 ribosome E3 ligase (UREL) complex, composed of UFL1, DDRGK1 and CDK5RAP3. Interacts with (unphosphorylated) ERN1/IRE1-alpha; interaction is dependent on UFM1 and takes place in response to endoplasmic reticulum stress, regulating ERN1/IRE1-alpha stability. Interacts with NFKBIA. Interacts with SOX9. Ubiquitinated. Ubiquitination probably triggers proteasomal degradation and is negatively regulated by UFL1, the enzyme involved in the ufmylation of DDRGK1. In terms of processing, ufmylated; conjugated to ubiquitin-like protein UFM1, probably at Lys-266 by UFL1. The relevance of ufmylation is however unclear: as DDRGK1 acts as a substrate adapter for ufmylation, it is uncertain whether ufmylation is a collateral effect of the ufmylation process or whether it is required to regulate its activity.

It localises to the endoplasmic reticulum membrane. In terms of biological role, component of the UFM1 ribosome E3 ligase (UREL) complex, a multiprotein complex that catalyzes ufmylation of endoplasmic reticulum-docked proteins. The UREL complex plays a key role in ribosome recycling by mediating mono-ufmylation of the RPL26/uL24 subunit of the 60S ribosome following ribosome dissociation: ufmylation weakens the junction between post-termination 60S subunits and SEC61 translocons, promoting release and recycling of the large ribosomal subunit from the endoplasmic reticulum membrane. Ufmylation of RPL26/uL24 and subsequent 60S ribosome recycling either take place after normal termination of translation or after ribosome stalling during cotranslational translocation at the endoplasmic reticulum. Within the UREL complex, DDRGK1 tethers the complex to the endoplasmic reticulum membrane to restrict its activity to endoplasmic reticulum-docked ribosomes and acts as an ufmylation 'reader': following RPL26/uL24 ufmylation, DDRGK1 specifically binds to ufmylated RPL26/uL24 via its UFIM motif, resulting in stable association between the 60S ribosome and the UREL complex, followed by dissociation of the 60S ribosome subunit from the endoplasmic reticulum membrane. The UREL complex is also involved in reticulophagy in response to endoplasmic reticulum stress by promoting ufmylation of proteins such as CYB5R3 and RPN1, thereby promoting lysosomal degradation of ufmylated proteins. Ufmylation-dependent reticulophagy inhibits the unfolded protein response (UPR) by regulating ERN1/IRE1-alpha stability. Acts as a regulator of immunity by promoting differentiation of B-cells into plasma cells: acts by promoting expansion of the endoplasmic reticulum and regulating the unfolded protein response (UPR). May also be required for TRIP4 ufmylation. May play a role in NF-kappa-B-mediated transcription through regulation of the phosphorylation and the degradation of NFKBIA, the inhibitor of NF-kappa-B. Plays a role in cartilage development through SOX9, inhibiting the ubiquitin-mediated proteasomal degradation of this transcriptional regulator. Required for stabilization and ufmylation of ATG9A. This is DDRGK domain-containing protein 1 from Bos taurus (Bovine).